Reading from the N-terminus, the 252-residue chain is Carbohydrate deacetylase (252 aa).

Mg(2+) contacts are provided by His59 and His122.

It belongs to the YdjC deacetylase family. Homodimer. Requires Mg(2+) as cofactor.

Functionally, probably catalyzes the deacetylation of acetylated carbohydrates an important step in the degradation of oligosaccharides. The protein is Carbohydrate deacetylase of Vibrio cholerae serotype O1 (strain ATCC 39541 / Classical Ogawa 395 / O395).